The chain runs to 107 residues: UPF0145 protein BT_3410 (107 aa).

It belongs to the UPF0145 family.

The protein is UPF0145 protein BT_3410 of Bacteroides thetaiotaomicron (strain ATCC 29148 / DSM 2079 / JCM 5827 / CCUG 10774 / NCTC 10582 / VPI-5482 / E50).